A 443-amino-acid polypeptide reads, in one-letter code: ATP-dependent protease ATPase subunit HslU (443 aa).

ATP contacts are provided by residues isoleucine 18, 60–65 (GVGKTE), aspartate 256, glutamate 321, and arginine 393.

The protein belongs to the ClpX chaperone family. HslU subfamily. In terms of assembly, a double ring-shaped homohexamer of HslV is capped on each side by a ring-shaped HslU homohexamer. The assembly of the HslU/HslV complex is dependent on binding of ATP.

It localises to the cytoplasm. In terms of biological role, ATPase subunit of a proteasome-like degradation complex; this subunit has chaperone activity. The binding of ATP and its subsequent hydrolysis by HslU are essential for unfolding of protein substrates subsequently hydrolyzed by HslV. HslU recognizes the N-terminal part of its protein substrates and unfolds these before they are guided to HslV for hydrolysis. The chain is ATP-dependent protease ATPase subunit HslU from Vibrio parahaemolyticus serotype O3:K6 (strain RIMD 2210633).